A 241-amino-acid chain; its full sequence is MMRRKIFLFGDSITEESFSDGGWGASLADLLRRKADMVLRGYSGYNTRWALKVVERVFPVAEEDGGDSPAAVTVFFGANDACLPERCSGFQHVPLHEYKQNLRSIVSFLKNRWPQTAIILITPPPIDEEARLRYPYIENTTGLPERTNEVAGLYAKACIAVAEECQISVTDLWSKMQQIPNWQTECLWDGLHLSRVGNKVVFEEVAKKLKEEGIGAEDLAVDLPLIEDVDPKDPLKSFDEF.

Residue Ser-12 is the Nucleophile of the active site. Catalysis depends on residues Asp-189 and His-192.

This sequence belongs to the 'GDSL' lipolytic enzyme family.

The polypeptide is GDSL esterase/lipase At5g45920 (Arabidopsis thaliana (Mouse-ear cress)).